The following is a 222-amino-acid chain: Deoxyribose-phosphate aldolase (222 aa).

D93 functions as the Proton donor/acceptor in the catalytic mechanism. Catalysis depends on K156, which acts as the Schiff-base intermediate with acetaldehyde. The active-site Proton donor/acceptor is the K186.

The protein belongs to the DeoC/FbaB aldolase family. DeoC type 1 subfamily.

It localises to the cytoplasm. The catalysed reaction is 2-deoxy-D-ribose 5-phosphate = D-glyceraldehyde 3-phosphate + acetaldehyde. It functions in the pathway carbohydrate degradation; 2-deoxy-D-ribose 1-phosphate degradation; D-glyceraldehyde 3-phosphate and acetaldehyde from 2-deoxy-alpha-D-ribose 1-phosphate: step 2/2. Functionally, catalyzes a reversible aldol reaction between acetaldehyde and D-glyceraldehyde 3-phosphate to generate 2-deoxy-D-ribose 5-phosphate. This Nocardia farcinica (strain IFM 10152) protein is Deoxyribose-phosphate aldolase.